A 66-amino-acid chain; its full sequence is Photosystem II reaction center protein H (66 aa).

Residues 27 to 47 traverse the membrane as a helical segment; sequence GAVPVMTVIGLLLLVFLVILL.

This sequence belongs to the PsbH family. PSII is composed of 1 copy each of membrane proteins PsbA, PsbB, PsbC, PsbD, PsbE, PsbF, PsbH, PsbI, PsbJ, PsbK, PsbL, PsbM, PsbT, PsbX, PsbY, Psb30/Ycf12, peripheral proteins PsbO, CyanoQ (PsbQ), PsbU, PsbV and a large number of cofactors. It forms dimeric complexes.

Its subcellular location is the cellular thylakoid membrane. In terms of biological role, one of the components of the core complex of photosystem II (PSII), required for its stability and/or assembly. PSII is a light-driven water:plastoquinone oxidoreductase that uses light energy to abstract electrons from H(2)O, generating O(2) and a proton gradient subsequently used for ATP formation. It consists of a core antenna complex that captures photons, and an electron transfer chain that converts photonic excitation into a charge separation. The protein is Photosystem II reaction center protein H of Prochlorococcus marinus (strain MIT 9215).